A 380-amino-acid polypeptide reads, in one-letter code: MANLRKTHPLLKIANDALVDLPAPSNISVWWNFGSLLGLCLATQILTGLFLAMHYTSDISTAFSSVCHICRDVSYGWLIRNIHANGASFFFICIYMHIARGLYYGSYLYKETWNIGVVLLLLTMMTAFVGYVLPWGQMSFWGATVITNLLSAVPYVGGALVQWIWGGFSVDNATLTRFFAFHFLFPFVIAAATVLHLLFLHETGSNNPAGINSDADKISFHPYFSYKDLLGFVAMLLGLTSLALFAPNLLGDPDNFTPANPLVTPPHIKPEWYFLFAYAILRSIPNKLGGVLALLFSILVLMVVPILHTSKQRGLTFRPLTQFLFWTLVADMLILTWIGGMPVEHPFIIIGQIASVIYFTIFLVLAPLAGWAENKALEWT.

4 consecutive transmembrane segments (helical) span residues Phe-33–Met-53, Trp-77–Ile-98, Trp-113–Leu-133, and Phe-178–Leu-198. Heme b-binding residues include His-83 and His-97. Positions 182 and 196 each coordinate heme b. His-201 serves as a coordination point for a ubiquinone. 4 helical membrane passes run Tyr-226 to Ala-246, Leu-288 to His-308, Leu-320 to Gly-340, and Phe-347 to Pro-367.

Belongs to the cytochrome b family. As to quaternary structure, the cytochrome bc1 complex contains 3 respiratory subunits (MT-CYB, CYC1 and UQCRFS1), 2 core proteins (UQCRC1 and UQCRC2) and probably 6 low-molecular weight proteins. The cofactor is heme b.

The protein resides in the mitochondrion inner membrane. In terms of biological role, component of the ubiquinol-cytochrome c reductase complex (complex III or cytochrome b-c1 complex) that is part of the mitochondrial respiratory chain. The b-c1 complex mediates electron transfer from ubiquinol to cytochrome c. Contributes to the generation of a proton gradient across the mitochondrial membrane that is then used for ATP synthesis. The sequence is that of Cytochrome b (mt-cyb) from Salmo salar (Atlantic salmon).